The chain runs to 856 residues: Dynamin-1 (856 aa).

The Dynamin-type G domain occupies 28–294 (DLDLPQIAVV…LTNHIRDTLP (267 aa)). Residues 38–45 (GGQSAGKS) are G1 motif. Residues Ser-41, Gly-43, Lys-44, Ser-45, Ser-46, Arg-59, and Gly-60 each coordinate GDP. The tract at residues 64-66 (VTR) is G2 motif. Phosphotyrosine is present on Tyr-80. Tyr-125 is modified (3'-nitrotyrosine; alternate). A Phosphotyrosine; alternate modification is found at Tyr-125. A G3 motif region spans residues 136-139 (DLPG). A G4 motif region spans residues 205-208 (TKLD). Residues Lys-206, Asp-208, Asp-211, Asn-236, Arg-237, and Gln-239 each contribute to the GDP site. Positions 235 to 238 (VNRS) are G5 motif. 2 positions are modified to phosphoserine: Ser-306 and Ser-347. Tyr-354 carries the phosphotyrosine modification. Ser-512 carries the post-translational modification Phosphoserine. Residues 519–625 (LVIRKGWLTI…WKASFLRAGV (107 aa)) form the PH domain. One can recognise a GED domain in the interval 659–750 (VETIRNLVDS…IIGDINTTTV (92 aa)). Residues 750 to 856 (VSTPMPPPVD…PIGSGKSIPS (107 aa)) form a disordered region. A compositionally biased stretch (polar residues) spans 763 to 781 (LQVQSVPTGRRSPTSSPTP). 2 positions are modified to phosphoserine: Ser-774 and Ser-778. Arg-796 carries the post-translational modification Omega-N-methylarginine. Phosphoserine is present on Ser-822. Residues 825–844 (PFGPPPQVPSRPNRAPPGVP) show a composition bias toward pro residues.

The protein belongs to the TRAFAC class dynamin-like GTPase superfamily. Dynamin/Fzo/YdjA family. As to quaternary structure, homodimer; homodimerization is mediated by the dynamin-type G domain which promotes assembly-stimulated GTPase activity. Homo-tetramer formed from two dimers in the absence of lipid. Oligomerizes into a helical polymer that self-assembles around the vesicle membrane, when associated to the menbrane through lipid binding. Interacts (via C-terminal proline-rich domain (PRD)) with SNX9 (via SH3 domain); this interaction allows regulation of DNM1 self-assembly during late stages of endocytic vesicle formation and supports DNM1's early functions in accelerating clathrin-coated pits (CCPs) maturation in non neuronals cell. Interacts (via C-terminal proline-rich domain (PRD)) with MYO1E (via SH3 domain); this interaction regulates receptor-mediated endocytosis. Interacts with SNX33 (via SH3 domain); this interaction decreases DNM1-dependent endocytosis. Interacts with DIAPH1. Interacts with GRB2 (via SH3 domain); this interaction mediates disassembly of DNM1 polymers, therefore modulates self-assembly. Forms a complex with BIN1 (via SH3 domain) and SH3GL2 (via SH3 domain). Forms a complex with SH3GL2 (via SH3 domain) and AMPH (via SH3 domain). Forms a complex with SH3GL2 (via SH3 domain) and SYNJ1. Interacts with AMPH. Interacts (via C-terminal proline-rich domain (PRD)) with SYT1; this interaction facilitates vesicle fission during clathrin-mediated endocytosis (CME). Interacts (via C-terminal proline-rich domain (PRD)) with PLCG1 (via SH3 domain); this interaction stimulates the release of GDP from DNM1 and enhances DNM1-dependent endocytosis. Interacts with SNPH; this interaction inhibits the binding of DNM1 to AMPH and DNM1-receptor-mediated endocytosis. Interacts with CAV1. Interacts with SH3GLB1 (via SH3 domain). Interacts with PACSIN1 (via SH3 domain), PACSIN2 (via SH3 domain) and PACSIN3 (via SH3 domain). Interacts with UNC119; this interaction decreases DNM1's GTPase activity and affects DNM1's interaction with AMPH. Interacts with AMPH. Interacts (GTP-bound form) with DNAJC6; this interaction allows clathrin-coated vesicle (CCV) formation at the plasma membrane. Post-translationally, phosphorylation at Ser-774 by GSK3B/GSK3-beta leads to inactivation of receptor-mediated endocytosis in non-neuronal cells. Dephosphorylation at Ser-774, through the EGFR downstream signaling, leads to activation and regulates early stages of clathrin-mediated endocytosis (CME).

Its subcellular location is the cell membrane. The protein resides in the membrane. It localises to the clathrin-coated pit. The protein localises to the cytoplasmic vesicle. It is found in the presynapse. Its subcellular location is the secretory vesicle. The protein resides in the chromaffin granule. The enzyme catalyses GTP + H2O = GDP + phosphate + H(+). Catalyzes the hydrolysis of GTP and utilizes this energy to mediate vesicle scission and participates in many forms of endocytosis, such as clathrin-mediated endocytosis or synaptic vesicle endocytosis as well as rapid endocytosis (RE). Associates to the membrane, through lipid binding, and self-assembles into rings and stacks of interconnected rings through oligomerization to form a helical polymer around the vesicle membrane leading to constriction of invaginated coated pits around their necks. Self-assembly of the helical polymer induces membrane tubules narrowing until the polymer reaches a length sufficient to trigger GTP hydrolysis. Depending on the curvature imposed on the tubules, membrane detachment from the helical polymer upon GTP hydrolysis can cause spontaneous hemifission followed by complete fission. May play a role in regulating early stages of clathrin-mediated endocytosis in non-neuronal cells through its activation by dephosphorylation via the signaling downstream of EGFR. Controls vesicle size at a step before fission, during formation of membrane pits, at hippocampal synapses. Controls plastic adaptation of the synaptic vesicle recycling machinery to high levels of activity. Mediates rapid endocytosis (RE), a Ca(2+)-dependent and clathrin- and K(+)-independent process in chromaffin cells. Microtubule-associated force-producing protein involved in producing microtubule bundles and able to bind and hydrolyze GTP. Through its interaction with DNAJC6, acts during the early steps of clathrin-coated vesicle (CCV) formation. The protein is Dynamin-1 of Bos taurus (Bovine).